Reading from the N-terminus, the 158-residue chain is Phosphopantetheine adenylyltransferase (158 aa).

T9 contacts substrate. Residues 9–10 and H17 contribute to the ATP site; that span reads TF. Substrate-binding residues include K41, L73, and R87. Residues 88–90, E98, and 123–129 each bind ATP; these read GLR and YAYISSS.

Belongs to the bacterial CoaD family. As to quaternary structure, homohexamer. Requires Mg(2+) as cofactor.

The protein localises to the cytoplasm. The enzyme catalyses (R)-4'-phosphopantetheine + ATP + H(+) = 3'-dephospho-CoA + diphosphate. It participates in cofactor biosynthesis; coenzyme A biosynthesis; CoA from (R)-pantothenate: step 4/5. Its function is as follows. Reversibly transfers an adenylyl group from ATP to 4'-phosphopantetheine, yielding dephospho-CoA (dPCoA) and pyrophosphate. The chain is Phosphopantetheine adenylyltransferase from Allochromatium vinosum (strain ATCC 17899 / DSM 180 / NBRC 103801 / NCIMB 10441 / D) (Chromatium vinosum).